The following is a 318-amino-acid chain: Mitochondrial coenzyme A transporter SLC25A42 (318 aa).

Solcar repeat units follow at residues 31–117, 129–214, and 224–312; these read RQVL…YKRI, LPPW…LKSL, and PYPF…MQIL. 6 helical membrane passes run 33–53, 89–109, 135–155, 186–206, 230–250, and 293–313; these read VLSS…AVAP, LWRG…IQFS, LLAG…LDLV, LYFG…LSFF, MVFG…LDVV, and LKGP…QILL.

This sequence belongs to the mitochondrial carrier (TC 2.A.29) family. Widely expressed. Highly expressed in adipose, followed by hypothalamus and brain coronal sections containing corpus callosum, fornix, thalamus, hypothalamus, optic chiasm, pons, midbrain, and cerebellum.

It is found in the mitochondrion inner membrane. It carries out the reaction ADP(out) + CoA(in) = ADP(in) + CoA(out). The catalysed reaction is 3'-dephospho-CoA(in) + ADP(out) = 3'-dephospho-CoA(out) + ADP(in). It catalyses the reaction adenosine 3',5'-bisphosphate(in) + ADP(out) = adenosine 3',5'-bisphosphate(out) + ADP(in). The enzyme catalyses AMP(in) + ADP(out) = AMP(out) + ADP(in). It carries out the reaction dADP(in) + ADP(out) = dADP(out) + ADP(in). The catalysed reaction is ADP(in) + ATP(out) = ADP(out) + ATP(in). In terms of biological role, mitochondrial carrier mediating the transport of coenzyme A (CoA) in mitochondria in exchange for intramitochondrial (deoxy)adenine nucleotides and adenosine 3',5'-diphosphate. This is Mitochondrial coenzyme A transporter SLC25A42 (Slc25a42) from Rattus norvegicus (Rat).